Consider the following 96-residue polypeptide: MKTLLLTLVVVTIVCLDFGGGLICYMGPKTPRTCPPGQNLCYTKTWCDGFCGSRGKVVVLGCAATCPTVKPGVDITCCATDKCNPFPKTKAPWERP.

Residues 1–21 (MKTLLLTLVVVTIVCLDFGGG) form the signal peptide. Cystine bridges form between C24–C41, C34–C62, C47–C51, C66–C77, and C78–C83.

This sequence belongs to the three-finger toxin family. Long-chain subfamily. Type II alpha-neurotoxin sub-subfamily. Expressed by the venom gland.

Its subcellular location is the secreted. Its function is as follows. Potent long-chain postsynaptic neurotoxin. Pseudo-irreversibly inhibits the nicotinic acetylcholine receptor through competitive antagonism. In Austrelaps labialis (Pygmy copperhead), this protein is Alpha-elapitoxin-Al2b.